The following is a 66-amino-acid chain: Regulator of G-protein signaling 11 (66 aa).

Positions 1–66 (EACEELRFGG…DAAQLHIYML (66 aa)) constitute an RGS domain.

Heterodimer with Gbeta5. Interacts with RGS7BP, leading to regulate the subcellular location of the heterodimer formed with Gbeta5.

Functionally, inhibits signal transduction by increasing the GTPase activity of G protein alpha subunits thereby driving them into their inactive GDP-bound form. The protein is Regulator of G-protein signaling 11 (Rgs11) of Rattus norvegicus (Rat).